Here is a 170-residue protein sequence, read N- to C-terminus: Small ribosomal subunit protein bS18c (170 aa).

2 disordered regions span residues 1-60 (MYTS…GPGD) and 149-170 (NRNL…SSDC). 7 consecutive repeats follow at residues 4-10 (SKQPFLK), 11-17 (SKQPFSK), 18-24 (SEQPFSK), 25-31 (SEQPFRK), 32-38 (SKQTFRK), 39-45 (FKQPFRK), and 46-52 (SKQPFRR). A 7 X 7 AA tandem repeats region spans residues 4 to 52 (SKQPFLKSKQPFSKSEQPFSKSEQPFRKSKQTFRKFKQPFRKSKQPFRR). Residues 13–26 (QPFSKSEQPFSKSE) are compositionally biased toward polar residues. Over residues 30–55 (RKSKQTFRKFKQPFRKSKQPFRRRPR) the composition is skewed to basic residues.

Belongs to the bacterial ribosomal protein bS18 family. In terms of assembly, part of the 30S ribosomal subunit.

Its subcellular location is the plastid. The protein localises to the chloroplast. The chain is Small ribosomal subunit protein bS18c (rps18) from Secale cereale (Rye).